The primary structure comprises 121 residues: Large ribosomal subunit protein bL12 (121 aa).

The protein belongs to the bacterial ribosomal protein bL12 family. As to quaternary structure, homodimer. Part of the ribosomal stalk of the 50S ribosomal subunit. Forms a multimeric L10(L12)X complex, where L10 forms an elongated spine to which 2 to 4 L12 dimers bind in a sequential fashion. Binds GTP-bound translation factors.

Functionally, forms part of the ribosomal stalk which helps the ribosome interact with GTP-bound translation factors. Is thus essential for accurate translation. The sequence is that of Large ribosomal subunit protein bL12 from Limosilactobacillus fermentum (strain NBRC 3956 / LMG 18251) (Lactobacillus fermentum).